The following is a 207-amino-acid chain: Ribosome maturation factor RimM (207 aa).

The PRC barrel domain occupies 114 to 207 (DDEYYWVDLI…RIDSDWPLDY (94 aa)).

It belongs to the RimM family. In terms of assembly, binds ribosomal protein uS19.

Its subcellular location is the cytoplasm. Functionally, an accessory protein needed during the final step in the assembly of 30S ribosomal subunit, possibly for assembly of the head region. Essential for efficient processing of 16S rRNA. May be needed both before and after RbfA during the maturation of 16S rRNA. It has affinity for free ribosomal 30S subunits but not for 70S ribosomes. The polypeptide is Ribosome maturation factor RimM (Bordetella bronchiseptica (strain ATCC BAA-588 / NCTC 13252 / RB50) (Alcaligenes bronchisepticus)).